We begin with the raw amino-acid sequence, 302 residues long: HTH-type transcriptional regulator AbgR (302 aa).

The HTH lysR-type domain occupies 5–62; sequence VKIHQIRAFVEVARQGSIRGASRMLNMSQPALSKSIQELEEGLAAQLFFRRSKGVTLT. Residues 22–41 constitute a DNA-binding region (H-T-H motif); sequence IRGASRMLNMSQPALSKSIQ.

This sequence belongs to the LysR transcriptional regulatory family.

Could be the regulator of the abg operon. This Escherichia coli (strain K12) protein is HTH-type transcriptional regulator AbgR (abgR).